The primary structure comprises 666 residues: Probable potassium transport system protein Kup (666 aa).

Helical transmembrane passes span 16-36 (GFIIALGIVYGDIGTSPLYTI), 58-78 (ISLIIWTLTLITTIKYVLIAL), 100-120 (PWLIIPAMIGGATLLSDGALT), 141-161 (IYQNQTNVIITTLVILIVLFG), 165-185 (FGTGFIGKIFGPVMFIWFSFL), 221-241 (IFILGSIFLATTGAEALYSDL), 253-273 (WPFVKMCIVLSYCGQAAWILA), 294-314 (VYLVSLATLAAIIASQALISG), 343-363 (LYIPVINWILFAVTSCTVLAF), 373-393 (YGLAITITMLMTTILLKYYLI), 399-419 (PILAHLVMAFFALVEFIFFLA), and 424-444 (FMHGGYAVVILALAIVFVMFI).

Belongs to the HAK/KUP transporter (TC 2.A.72) family.

The protein resides in the cell membrane. It catalyses the reaction K(+)(in) + H(+)(in) = K(+)(out) + H(+)(out). In terms of biological role, transport of potassium into the cell. Likely operates as a K(+):H(+) symporter. The polypeptide is Probable potassium transport system protein Kup (Streptococcus pyogenes serotype M1).